A 237-amino-acid polypeptide reads, in one-letter code: Riboflavin kinase (237 aa).

The segment at 1 to 23 is disordered; it reads MSLPNPDNRPLLIGPPTGPEAPF. Residues T46 and N48 each contribute to the Mg(2+) site. The disordered stretch occupies residues 82–126; the sequence is VLYQKPPTSEPVMMDPVQQQQQQQQQQRNQQQQQEGGVGSAQQEK. The span at 99–115 shows a compositional bias: low complexity; that stretch reads QQQQQQQQQQRNQQQQQ. E158 (nucleophile) is an active-site residue.

This sequence belongs to the flavokinase family. Zn(2+) is required as a cofactor. Requires Mg(2+) as cofactor.

The enzyme catalyses riboflavin + ATP = FMN + ADP + H(+). The protein operates within cofactor biosynthesis; FMN biosynthesis; FMN from riboflavin (ATP route): step 1/1. Catalyzes the phosphorylation of riboflavin (vitamin B2) to form flavin mononucleotide (FMN) coenzyme. This Neurospora crassa (strain ATCC 24698 / 74-OR23-1A / CBS 708.71 / DSM 1257 / FGSC 987) protein is Riboflavin kinase (fmn1).